A 435-amino-acid polypeptide reads, in one-letter code: Proline--tRNA ligase (435 aa).

Belongs to the class-II aminoacyl-tRNA synthetase family. ProS type 2 subfamily. As to quaternary structure, homodimer.

The protein resides in the cytoplasm. The catalysed reaction is tRNA(Pro) + L-proline + ATP = L-prolyl-tRNA(Pro) + AMP + diphosphate. Its function is as follows. Catalyzes the attachment of proline to tRNA(Pro) in a two-step reaction: proline is first activated by ATP to form Pro-AMP and then transferred to the acceptor end of tRNA(Pro). The protein is Proline--tRNA ligase of Rhodospirillum rubrum (strain ATCC 11170 / ATH 1.1.1 / DSM 467 / LMG 4362 / NCIMB 8255 / S1).